Here is a 269-residue protein sequence, read N- to C-terminus: tRNA pseudouridine synthase A (269 aa).

The Nucleophile role is filled by D55. Y111 contacts substrate.

Belongs to the tRNA pseudouridine synthase TruA family.

It carries out the reaction uridine(38/39/40) in tRNA = pseudouridine(38/39/40) in tRNA. In terms of biological role, formation of pseudouridine at positions 38, 39 and 40 in the anticodon stem and loop of transfer RNAs. This is tRNA pseudouridine synthase A from Methanosarcina barkeri (strain Fusaro / DSM 804).